Reading from the N-terminus, the 457-residue chain is Serine--tRNA ligase (457 aa).

252–254 (TAE) contributes to the L-serine binding site. ATP is bound by residues 283 to 285 (RKE) and Val-299. An L-serine-binding site is contributed by Glu-306. 370–373 (EMVS) is an ATP binding site. Residue Thr-406 participates in L-serine binding.

The protein belongs to the class-II aminoacyl-tRNA synthetase family. Type-1 seryl-tRNA synthetase subfamily. Homodimer. The tRNA molecule binds across the dimer.

Its subcellular location is the cytoplasm. The enzyme catalyses tRNA(Ser) + L-serine + ATP = L-seryl-tRNA(Ser) + AMP + diphosphate + H(+). It carries out the reaction tRNA(Sec) + L-serine + ATP = L-seryl-tRNA(Sec) + AMP + diphosphate + H(+). It functions in the pathway aminoacyl-tRNA biosynthesis; selenocysteinyl-tRNA(Sec) biosynthesis; L-seryl-tRNA(Sec) from L-serine and tRNA(Sec): step 1/1. In terms of biological role, catalyzes the attachment of serine to tRNA(Ser). Is also able to aminoacylate tRNA(Sec) with serine, to form the misacylated tRNA L-seryl-tRNA(Sec), which will be further converted into selenocysteinyl-tRNA(Sec). The polypeptide is Serine--tRNA ligase (Saccharolobus islandicus (strain M.14.25 / Kamchatka #1) (Sulfolobus islandicus)).